The following is a 172-amino-acid chain: Ribosome maturation factor RimM (172 aa).

The PRC barrel domain occupies 96 to 169 (EGYFYHFQLQ…RMEIKLLPGL (74 aa)).

The protein belongs to the RimM family. Binds ribosomal protein uS19.

The protein resides in the cytoplasm. An accessory protein needed during the final step in the assembly of 30S ribosomal subunit, possibly for assembly of the head region. Essential for efficient processing of 16S rRNA. May be needed both before and after RbfA during the maturation of 16S rRNA. It has affinity for free ribosomal 30S subunits but not for 70S ribosomes. This Syntrophomonas wolfei subsp. wolfei (strain DSM 2245B / Goettingen) protein is Ribosome maturation factor RimM.